Reading from the N-terminus, the 402-residue chain is MRYNSNYLMYFCLVLGIFANIYVIIKITLGSSHILEYFQKNSNLSPKCEINVNNLLSFIENRHFLDLEQKNSQKSQPNYEKTLQLMLFAFPSGGLGNKLFEIISLHGIATSLQRKAVINATNPSFIETLNRNIQPLFPKLADQFTLRIIPDSLVTHQQTNWGRCCVYDDPSRFLNRSDQNLILDGHYFQSFKYFHHIRPQVREWLAPSKLQAMRAEILLPAKFRDDFLICTHVRRGDFQYDGLHRPSDATFTRAATDFLVDLYRKSHERVNVVVLGNDIHFAYTVFEDRVAHFTFLQKPVNNSYDYSLPQISPSYTAILTPTLTPEIDLAFSRLFCDVTLITAPSSTFGWWLSYLAKRTATTYYRDILESKDGVAGEMHPEDFYPPEWIKLKTDLNGKISKY.

At 1–6 (MRYNSN) the chain is on the cytoplasmic side. The helical; Signal-anchor for type II membrane protein transmembrane segment at 7-27 (YLMYFCLVLGIFANIYVIIKI) threads the bilayer. Residues 28 to 402 (TLGSSHILEY…TDLNGKISKY (375 aa)) are Lumenal-facing. Residues N119, N175, and N301 are each glycosylated (N-linked (GlcNAc...) asparagine).

This sequence belongs to the glycosyltransferase 11 family. In terms of assembly, may form oligomers. N-glycosylated. Expression is restricted to pharyngeal neurons and gland cells.

The protein resides in the golgi apparatus. It localises to the golgi stack membrane. Its pathway is protein modification; protein glycosylation. In terms of biological role, selectively catalyzes the addition of fucose in alpha 1-2 linkage to Gal-beta-(1-&gt;3)-GalNAc-alpha-R, Gal-beta-(1-&gt;3)-(GlcNAc-beta-(1-&gt;6))-GalNAc-alpha-R and Gal-beta-(1-&gt;3)-GalNAc acceptors but not Gal-beta-(1-&gt;3)-GlcNAc-beta-(1-&gt;3)-Gal-beta-(1-&gt;4)-Glc in vitro. In Caenorhabditis elegans, this protein is Galactoside 2-alpha-L-fucosyltransferase.